The primary structure comprises 344 residues: Nicotinate-nucleotide--dimethylbenzimidazole phosphoribosyltransferase (344 aa).

Glutamate 305 functions as the Proton acceptor in the catalytic mechanism.

The protein belongs to the CobT family.

It carries out the reaction 5,6-dimethylbenzimidazole + nicotinate beta-D-ribonucleotide = alpha-ribazole 5'-phosphate + nicotinate + H(+). Its pathway is nucleoside biosynthesis; alpha-ribazole biosynthesis; alpha-ribazole from 5,6-dimethylbenzimidazole: step 1/2. Functionally, catalyzes the synthesis of alpha-ribazole-5'-phosphate from nicotinate mononucleotide (NAMN) and 5,6-dimethylbenzimidazole (DMB). In Agrobacterium fabrum (strain C58 / ATCC 33970) (Agrobacterium tumefaciens (strain C58)), this protein is Nicotinate-nucleotide--dimethylbenzimidazole phosphoribosyltransferase.